Consider the following 296-residue polypeptide: Cation-efflux pump FieF (296 aa).

At 1 to 18 (MTQTSQYDFWVKLASRAS) the chain is on the cytoplasmic side. A helical transmembrane segment spans residues 19–32 (VATALTLITIKLLA). Residues 33-43 (WLYSGSASMLA) are Periplasmic-facing. The chain crosses the membrane as a helical span at residues 44–60 (SLTDSFADTLASIINFI). Zn(2+)-binding residues include aspartate 47, aspartate 51, aspartate 70, histidine 73, and histidine 77. At 61-83 (AIRYAIVPADHDHRYGHGKAEPL) the chain is on the cytoplasmic side. The chain crosses the membrane as a helical span at residues 84–105 (AALAQSAFIMGSAFLLLFYGGE). Topologically, residues 106–119 (RLLNPSPVENATLG) are periplasmic. A helical membrane pass occupies residues 120–138 (VVVSVVAIVLTLALVLLQK). At 139–145 (RALAATN) the chain is on the cytoplasmic side. Residues 146–160 (STVVEADSLHYKSDL) traverse the membrane as a helical segment. The Zn(2+) site is built by histidine 155 and aspartate 159. The Periplasmic portion of the chain corresponds to 161–180 (FLNAAVLLALVLSQYGWWWA). A helical transmembrane segment spans residues 181–200 (DGLFAVLIACYIGQQAFDLG). The Cytoplasmic segment spans residues 201–296 (YRSIQALLDR…DPVQVEPTTQ (96 aa)). Zn(2+) is bound by residues histidine 234, aspartate 235, histidine 250, histidine 263, histidine 285, and aspartate 287.

Belongs to the cation diffusion facilitator (CDF) transporter (TC 2.A.4) family. FieF subfamily. As to quaternary structure, homodimer. The subunits are held together in a parallel orientation through zinc binding at the interface of the cytoplasmic domains.

The protein localises to the cell inner membrane. It carries out the reaction Zn(2+)(in) + H(+)(out) = Zn(2+)(out) + H(+)(in). The enzyme catalyses Cd(2+)(in) + H(+)(out) = Cd(2+)(out) + H(+)(in). It catalyses the reaction Fe(2+)(in) + H(+)(out) = Fe(2+)(out) + H(+)(in). Its activity is regulated as follows. Cytoplasmic zinc binding may trigger movements of two electrically repulsive cytoplasmic domains and reorient transmembrane helices, thereby modulating coordination geometry of the active site for zinc transport. It may modulate activity in response to cytoplasmic metal fluctuations. Functionally, divalent metal cation transporter which exports Zn(2+), Cd(2+) and possibly Fe(2+). Zn(2+)/H(+) antiporter capable of using the proton motive force to remove Zn(2+) from the cytoplasm. May be involved in zinc and iron detoxification by efflux. The chain is Cation-efflux pump FieF from Shewanella oneidensis (strain ATCC 700550 / JCM 31522 / CIP 106686 / LMG 19005 / NCIMB 14063 / MR-1).